The chain runs to 96 residues: Co-chaperonin GroES (96 aa).

It belongs to the GroES chaperonin family. As to quaternary structure, heptamer of 7 subunits arranged in a ring. Interacts with the chaperonin GroEL.

Its subcellular location is the cytoplasm. Its function is as follows. Together with the chaperonin GroEL, plays an essential role in assisting protein folding. The GroEL-GroES system forms a nano-cage that allows encapsulation of the non-native substrate proteins and provides a physical environment optimized to promote and accelerate protein folding. GroES binds to the apical surface of the GroEL ring, thereby capping the opening of the GroEL channel. This is Co-chaperonin GroES from Acidithiobacillus ferrooxidans (strain ATCC 23270 / DSM 14882 / CIP 104768 / NCIMB 8455) (Ferrobacillus ferrooxidans (strain ATCC 23270)).